The following is a 253-amino-acid chain: Small ribosomal subunit protein uS2 (253 aa).

The protein belongs to the universal ribosomal protein uS2 family.

The chain is Small ribosomal subunit protein uS2 from Cereibacter sphaeroides (strain ATCC 17023 / DSM 158 / JCM 6121 / CCUG 31486 / LMG 2827 / NBRC 12203 / NCIMB 8253 / ATH 2.4.1.) (Rhodobacter sphaeroides).